The chain runs to 380 residues: Mitogen-activated protein kinase mpkC (380 aa).

One can recognise a Protein kinase domain in the interval 20–300 (YVNLQPIGMG…AQDALRHPYL (281 aa)). ATP is bound by residues 26-34 (IGMGSFGLV) and K49. The active-site Proton acceptor is the D141. T171 carries the phosphothreonine modification. The TXY motif lies at 171–173 (TGY). Phosphotyrosine is present on Y173.

Belongs to the protein kinase superfamily. Ser/Thr protein kinase family. MAP kinase subfamily. HOG1 sub-subfamily. Mg(2+) serves as cofactor. Post-translationally, dually phosphorylated on Thr-171 and Tyr-173, which activates the enzyme.

The catalysed reaction is L-seryl-[protein] + ATP = O-phospho-L-seryl-[protein] + ADP + H(+). The enzyme catalyses L-threonyl-[protein] + ATP = O-phospho-L-threonyl-[protein] + ADP + H(+). With respect to regulation, activated by tyrosine and threonine phosphorylation. Mitogen-activated protein kinase required for growth on media where sorbitol or mannitol is the sole carbon source. The protein is Mitogen-activated protein kinase mpkC (mpkC) of Aspergillus clavatus (strain ATCC 1007 / CBS 513.65 / DSM 816 / NCTC 3887 / NRRL 1 / QM 1276 / 107).